A 308-amino-acid polypeptide reads, in one-letter code: UDP-N-acetylenolpyruvoylglucosamine reductase (308 aa).

An FAD-binding PCMH-type domain is found at 32-196 (VGGPAARLYK…ISAKLQLSPG (165 aa)). R176 is a catalytic residue. The Proton donor role is filled by S225. E296 is an active-site residue.

It belongs to the MurB family. Requires FAD as cofactor.

The protein resides in the cytoplasm. The enzyme catalyses UDP-N-acetyl-alpha-D-muramate + NADP(+) = UDP-N-acetyl-3-O-(1-carboxyvinyl)-alpha-D-glucosamine + NADPH + H(+). The protein operates within cell wall biogenesis; peptidoglycan biosynthesis. Its function is as follows. Cell wall formation. This is UDP-N-acetylenolpyruvoylglucosamine reductase from Legionella pneumophila subsp. pneumophila (strain Philadelphia 1 / ATCC 33152 / DSM 7513).